The chain runs to 304 residues: Mycothiol acetyltransferase (304 aa).

Residue E36 participates in 1D-myo-inositol 2-(L-cysteinylamino)-2-deoxy-alpha-D-glucopyranoside binding. 73-75 contributes to the acetyl-CoA binding site; it reads LFV. Positions 145-304 constitute an N-acetyltransferase domain; the sequence is LEIQTYTESV…EEHCVWAKSD (160 aa). The 1D-myo-inositol 2-(L-cysteinylamino)-2-deoxy-alpha-D-glucopyranoside site is built by E179, K225, and E236. 240–242 lines the acetyl-CoA pocket; that stretch reads VGL. Position 274 (Y274) interacts with 1D-myo-inositol 2-(L-cysteinylamino)-2-deoxy-alpha-D-glucopyranoside. 279–284 provides a ligand contact to acetyl-CoA; that stretch reads NDPAVK.

Belongs to the acetyltransferase family. MshD subfamily. As to quaternary structure, monomer.

It catalyses the reaction 1D-myo-inositol 2-(L-cysteinylamino)-2-deoxy-alpha-D-glucopyranoside + acetyl-CoA = mycothiol + CoA + H(+). In terms of biological role, catalyzes the transfer of acetyl from acetyl-CoA to desacetylmycothiol (Cys-GlcN-Ins) to form mycothiol. This chain is Mycothiol acetyltransferase, found in Corynebacterium aurimucosum (strain ATCC 700975 / DSM 44827 / CIP 107346 / CN-1) (Corynebacterium nigricans).